The primary structure comprises 86 residues: DNA-directed RNA polymerase subunit omega (86 aa).

The protein belongs to the RNA polymerase subunit omega family. As to quaternary structure, the RNAP catalytic core consists of 2 alpha, 1 beta, 1 beta' and 1 omega subunit. When a sigma factor is associated with the core the holoenzyme is formed, which can initiate transcription.

It carries out the reaction RNA(n) + a ribonucleoside 5'-triphosphate = RNA(n+1) + diphosphate. Promotes RNA polymerase assembly. Latches the N- and C-terminal regions of the beta' subunit thereby facilitating its interaction with the beta and alpha subunits. The polypeptide is DNA-directed RNA polymerase subunit omega (Psychrobacter sp. (strain PRwf-1)).